The sequence spans 468 residues: MAGARGLLCLWLGYFCLNLAQGQRPNLHLPGLRETEPSDRATGGSPSPDLRPHDKVSEHMLWLYDRYSGSSRVQATRTPGSQLPGPQPLRGGNTVRSFRAAAAGTPQTKGLHTFNLTSLTKSENILSATLYFYVGELVNISLSCPEPQGCSHHTQRQHIQIDLSAWILKSNQSQLLGHLSVDVVRPYRDSVSWLSKDITQLLRKAKQNEEFLIGFNITSRAHELPKRMLFFPEPYILVYANDAAISEPESVVSSLQRHRDFTAGTGPRLDSHVREALSVERRKKRSTGILLPLQNNELPGAEYQYKEEGAWEERKPYKSLQTQPPEKSRNKKKQRKGSHQKGQTLQFDEQTLKKARRKQWVEPRNCARRYLKVDFADIGWSEWIISPKSFDAFYCSGACQFPMPKSLKPSNHATIQSIVRAVGVVSGIPEPCCVPEKMSSLSILFFDENKNVVLKVYPNMTVDSCACR.

The first 22 residues, 1-22 (MAGARGLLCLWLGYFCLNLAQG), serve as a signal peptide directing secretion. The propeptide occupies 23–358 (QRPNLHLPGL…EQTLKKARRK (336 aa)). The disordered stretch occupies residues 29–53 (LPGLRETEPSDRATGGSPSPDLRPH). N-linked (GlcNAc...) asparagine glycans are attached at residues Asn-115, Asn-139, Asn-171, and Asn-216. The interval 314–349 (RKPYKSLQTQPPEKSRNKKKQRKGSHQKGQTLQFDE) is disordered. Residues 329–339 (RNKKKQRKGSH) show a composition bias toward basic residues. Over residues 340–349 (QKGQTLQFDE) the composition is skewed to polar residues. Intrachain disulfides connect Cys-366–Cys-433, Cys-395–Cys-465, and Cys-399–Cys-467. An N-linked (GlcNAc...) asparagine glycan is attached at Asn-459.

This sequence belongs to the TGF-beta family. In terms of assembly, homodimer; disulfide-linked.

It localises to the secreted. Its function is as follows. Negatively regulates bone density. Antagonizes the ability of certain osteogenic BMPs to induce osteoprogenitor differentiation and ossification. The sequence is that of Bone morphogenetic protein 3 (Bmp3) from Mus musculus (Mouse).